The chain runs to 493 residues: Putative lon protease homolog (493 aa).

Position 52 to 59 (52 to 59 (GPPGVGKS)) interacts with ATP.

It belongs to the peptidase S16 family.

The protein is Putative lon protease homolog of Thermoplasma acidophilum (strain ATCC 25905 / DSM 1728 / JCM 9062 / NBRC 15155 / AMRC-C165).